Consider the following 357-residue polypeptide: Dual-specificity RNA methyltransferase RlmN (357 aa).

Glu89 acts as the Proton acceptor in catalysis. Residues 109-340 (EGEKYTVCVS…CTIRESKALD (232 aa)) form the Radical SAM core domain. Cys116 and Cys345 are oxidised to a cystine. Residues Cys123, Cys127, and Cys130 each contribute to the [4Fe-4S] cluster site. S-adenosyl-L-methionine-binding positions include 173–174 (GE), Ser203, 226–228 (SLH), and Asn302. Residue Cys345 is the S-methylcysteine intermediate of the active site.

The protein belongs to the radical SAM superfamily. RlmN family. The cofactor is [4Fe-4S] cluster.

It is found in the cytoplasm. It catalyses the reaction adenosine(2503) in 23S rRNA + 2 reduced [2Fe-2S]-[ferredoxin] + 2 S-adenosyl-L-methionine = 2-methyladenosine(2503) in 23S rRNA + 5'-deoxyadenosine + L-methionine + 2 oxidized [2Fe-2S]-[ferredoxin] + S-adenosyl-L-homocysteine. The enzyme catalyses adenosine(37) in tRNA + 2 reduced [2Fe-2S]-[ferredoxin] + 2 S-adenosyl-L-methionine = 2-methyladenosine(37) in tRNA + 5'-deoxyadenosine + L-methionine + 2 oxidized [2Fe-2S]-[ferredoxin] + S-adenosyl-L-homocysteine. Functionally, specifically methylates position 2 of adenine 2503 in 23S rRNA and position 2 of adenine 37 in tRNAs. m2A2503 modification seems to play a crucial role in the proofreading step occurring at the peptidyl transferase center and thus would serve to optimize ribosomal fidelity. This chain is Dual-specificity RNA methyltransferase RlmN, found in Helicobacter pylori (strain G27).